The sequence spans 540 residues: BTB/POZ domain-containing protein 6-A (540 aa).

A BTB domain is found at 138-208; that stretch reads ADVHFIVGPP…MYSDEIELAP (71 aa).

Interacts with cul3. Interacts (via BTB domain) with zbtb16/plzf. Expressed in the developing central nervous system.

It localises to the cytoplasm. Its subcellular location is the nucleus. In terms of biological role, adapter protein for the cul3 E3 ubiquitin-protein ligase complex. Promotes the export of zbtb16/plzf from the nucleus to the cytoplasm and targets zbtb16/plzf for ubiquitination and degradation. Up-regulates neurog1 expression and antagonizes zbtb16/plzf, to promote neurogenesis. The chain is BTB/POZ domain-containing protein 6-A (btbd6a) from Danio rerio (Zebrafish).